The chain runs to 217 residues: NADPH-dependent 3-demethoxyubiquinone 3-hydroxylase, mitochondrial (217 aa).

A run of 2 repeats spans residues 49-130 (IIER…SALM) and 131-217 (GKEA…STRV). The interval 49-217 (IIERIIRVDH…KTAIWLSTRV (169 aa)) is 2 X approximate tandem repeats. Residue Arg52 participates in NADH binding. Residues Glu61, Glu91, His94, Glu143, Glu178, and His181 each coordinate Fe cation. Arg216 is a binding site for NADH.

Belongs to the COQ7 family. As to quaternary structure, component of a multi-subunit COQ enzyme complex. Fe cation is required as a cofactor.

It is found in the mitochondrion inner membrane. The enzyme catalyses a 5-methoxy-2-methyl-3-(all-trans-polyprenyl)benzoquinone + NADH + O2 = a 3-demethylubiquinone + NAD(+) + H2O. It functions in the pathway cofactor biosynthesis; ubiquinone biosynthesis. Catalyzes the hydroxylation of the 5-methoxy-2-methyl-3-(all-trans-polyprenyl)benzoquinone at the C6 position and participates in the biosynthesis of ubiquinone. Catalyzes the reaction through a substrate-mediated reduction pathway, whereby NADH shuttles electrons to 5-methoxy-2-methyl-3-(all-trans-decaprenyl)benzoquinone, which then transfers the electrons to the two Fe(3+) centers. The binding of 5-methoxy-2-methyl-3-(all-trans-polyprenyl)benzoquinone (DMQn) mediates reduction of the diiron center by nicotinamide adenine dinucleotide (NADH) and initiates oxygen activation for subsequent DMQ hydroxylation. Also has a structural role in the COQ enzyme complex, stabilizing other COQ polypeptides. The sequence is that of NADPH-dependent 3-demethoxyubiquinone 3-hydroxylase, mitochondrial from Dictyostelium discoideum (Social amoeba).